A 1056-amino-acid chain; its full sequence is Kinesin-like protein KIF11 (1056 aa).

The region spanning 18–359 (NIQVVVRCRP…LEYAHRAKNI (342 aa)) is the Kinesin motor domain. 105–112 (GQTGTGKT) is a binding site for ATP. At Lys-146 the chain carries N6-acetyllysine. Coiled-coil stretches lie at residues 364-480 (EVNQ…KEEY) and 736-763 (LEEK…DIVN). Thr-458 is modified (phosphothreonine). Lys-477 is covalently cross-linked (Glycyl lysine isopeptide (Lys-Gly) (interchain with G-Cter in SUMO2)). Thr-925 is subject to Phosphothreonine. Position 926 is a phosphothreonine; by CDK1 (Thr-926). The residue at position 1033 (Ser-1033) is a Phosphoserine; by NEK6. Residue Lys-1034 forms a Glycyl lysine isopeptide (Lys-Gly) (interchain with G-Cter in ubiquitin) linkage.

The protein belongs to the TRAFAC class myosin-kinesin ATPase superfamily. Kinesin family. BimC subfamily. In terms of assembly, interacts with the thyroid hormone receptor in the presence of thyroid hormone. Component of a large chromatin remodeling complex, at least composed of MYSM1, PCAF, RBM10 and KIF11/TRIP5. Interacts (via C-terminus) with the kinase NEK6 in both interphase and mitosis. Interacts with RARRES1 and AGBL2. Interacts with TPX2. Phosphorylated exclusively on serine during S phase, but on both serine and Thr-926 during mitosis, so controlling the association of KIF11 with the spindle apparatus (probably during early prophase). Post-translationally, a subset of this protein primarily localized at the spindle pole is phosphorylated by NEK6 during mitosis; phosphorylation is required for mitotic function. In terms of processing, ubiquitinated at Lys-1034 by UHRF1 via 'Lys-63'-linked ubiquitin chains, leading to interaction with spindle assembly factor TPX2, thereby ensuring accurate distribution to the spindles during metaphase.

The protein localises to the cytoplasm. It is found in the cytoskeleton. It localises to the spindle pole. Functionally, motor protein required for establishing a bipolar spindle and thus contributing to chromosome congression during mitosis. Required in non-mitotic cells for transport of secretory proteins from the Golgi complex to the cell surface. In Homo sapiens (Human), this protein is Kinesin-like protein KIF11 (KIF11).